Reading from the N-terminus, the 211-residue chain is MRDPVETYMNLVPMVVEQTNRGERAYDIFSRLLKERIIFLTGPVEDGMSTLVVAQLLFLEAENPKKEISMYINSPGGVVTSGLAIYDTMQFIRPPVSTLCTGQAASMGSLLLCAGAKDMRFSLPNARIMVHQPSGGFQGQATDIMLHAQEILNLKKRLNEIYVKHTGQTYKAIEDALERDKFLTADMARDFGLVDKVIDKRPEEASPAKPV.

Ser-106 serves as the catalytic Nucleophile. Residue His-131 is part of the active site.

The protein belongs to the peptidase S14 family. Fourteen ClpP subunits assemble into 2 heptameric rings which stack back to back to give a disk-like structure with a central cavity, resembling the structure of eukaryotic proteasomes.

It is found in the cytoplasm. The catalysed reaction is Hydrolysis of proteins to small peptides in the presence of ATP and magnesium. alpha-casein is the usual test substrate. In the absence of ATP, only oligopeptides shorter than five residues are hydrolyzed (such as succinyl-Leu-Tyr-|-NHMec, and Leu-Tyr-Leu-|-Tyr-Trp, in which cleavage of the -Tyr-|-Leu- and -Tyr-|-Trp bonds also occurs).. Functionally, cleaves peptides in various proteins in a process that requires ATP hydrolysis. Has a chymotrypsin-like activity. Plays a major role in the degradation of misfolded proteins. The chain is ATP-dependent Clp protease proteolytic subunit from Rhodopseudomonas palustris (strain BisA53).